The primary structure comprises 115 residues: Methylmalonyl-CoA decarboxylase subunit delta (115 aa).

A helical membrane pass occupies residues 11–31 (WLIMAINMTVVFAVLIALGIL). Positions 46–70 (EAPAATAPVATPTATPVAPANASAQ) are disordered. Positions 48–65 (PAATAPVATPTATPVAPA) are enriched in low complexity.

It belongs to the OadG family. As to quaternary structure, the methylmalonyl-CoA decarboxylase is composed of five subunits: the carboxyltransferase alpha subunit (MmdA), the tunnel beta subunit (MmdB), the biotin-containing gamma subunit (MmdC), and the delta (MmdD) and epsilon (MmdE) subunits. In terms of processing, the N-terminus is blocked.

Its subcellular location is the cell membrane. The enzyme catalyses (S)-methylmalonyl-CoA + Na(+)(in) + H(+)(out) = propanoyl-CoA + Na(+)(out) + CO2. Completely inhibited by avidin. Subunit of the sodium ion pump methylmalonyl-CoA decarboxylase, which converts the chemical energy of a decarboxylation reaction into an electrochemical gradient of Na(+) ions across the cytoplasmic membrane, thereby creating a sodium ion motive force that is used for ATP synthesis. The delta subunit is required for catalytic activity as well as for the proper assembly of the individual subunits to an enzyme complex. Can also convert malonyl-CoA into acetyl-CoA. The polypeptide is Methylmalonyl-CoA decarboxylase subunit delta (Veillonella parvula (Staphylococcus parvulus)).